The chain runs to 218 residues: uncharacterized protein (218 aa).

An N-terminal signal peptide occupies residues 1–17 (MLKKIIILFLGIFLLSS). The N-palmitoyl cysteine moiety is linked to residue C18. Residue C18 is the site of S-diacylglycerol cysteine attachment. Residues 136-164 (YKEKKIEEELNQIKAMLKETKRDITKYTC) are a coiled coil.

Its subcellular location is the cell membrane. This is an uncharacterized protein from Rickettsia typhi (strain ATCC VR-144 / Wilmington).